A 495-amino-acid chain; its full sequence is Protein painting of fourth (495 aa).

The tract at residues 1-51 (MDSKRAALESGDGPDAKRLDTTDDQDKEASGGDGSQVMLAKHVAPYTGHGC) is disordered. One can recognise an RRM domain in the interval 215-289 (CSLYVGNIPF…RTLTVRYRRL (75 aa)). Residues 332 to 342 (ISDSDNCSDSS) are compositionally biased toward low complexity. Disordered regions lie at residues 332 to 358 (ISDSDNCSDSSGNGKEDGKRKKKINEQ), 432 to 451 (PVPATKPTTQAQDDSQKKAK), and 461 to 495 (GPFRRGTSAMKTADEYEKDDRLEELYAQLERDPDP). The span at 345–358 (GKEDGKRKKKINEQ) shows a compositional bias: basic and acidic residues. The Bipartite nuclear localization signal signature appears at 351–367 (RKKKINEQEREIEKLKR). The segment covering 472–495 (TADEYEKDDRLEELYAQLERDPDP) has biased composition (basic and acidic residues).

In terms of assembly, interacts with Zeste. In terms of tissue distribution, weakly expressed in embryos. Expression increases during larval and pupal stages. In adults, it is predominantly expressed in males, while it is weakly expressed in females.

The protein localises to the nucleus. The protein resides in the chromosome. Probable RNA-binding protein that specifically binds to the fourth chromosome and may bind an RNA that spreads the fourth chromosome. May be a reminiscence of X chromosome dosage compensation of ancestral Drosophila species in which the X and the fourth chromosomes are one single chromosome. The sequence is that of Protein painting of fourth (Pof) from Drosophila melanogaster (Fruit fly).